Reading from the N-terminus, the 177-residue chain is Large ribosomal subunit protein uL10 (177 aa).

It belongs to the universal ribosomal protein uL10 family. Part of the ribosomal stalk of the 50S ribosomal subunit. The N-terminus interacts with L11 and the large rRNA to form the base of the stalk. The C-terminus forms an elongated spine to which L12 dimers bind in a sequential fashion forming a multimeric L10(L12)X complex.

Functionally, forms part of the ribosomal stalk, playing a central role in the interaction of the ribosome with GTP-bound translation factors. The protein is Large ribosomal subunit protein uL10 of Legionella pneumophila (strain Corby).